The chain runs to 37 residues: Photosystem II reaction center protein T (37 aa).

Residues 3–23 (ALVYTFLLVGTLGIIFFAIFF) form a helical membrane-spanning segment.

This sequence belongs to the PsbT family. In terms of assembly, PSII is composed of 1 copy each of membrane proteins PsbA, PsbB, PsbC, PsbD, PsbE, PsbF, PsbH, PsbI, PsbJ, PsbK, PsbL, PsbM, PsbT, PsbY, PsbZ, Psb30/Ycf12, at least 3 peripheral proteins of the oxygen-evolving complex and a large number of cofactors. It forms dimeric complexes.

Its subcellular location is the plastid. It is found in the chloroplast thylakoid membrane. Found at the monomer-monomer interface of the photosystem II (PS II) dimer, plays a role in assembly and dimerization of PSII. PSII is a light-driven water plastoquinone oxidoreductase, using light energy to abstract electrons from H(2)O, generating a proton gradient subsequently used for ATP formation. This Spirogyra maxima (Green alga) protein is Photosystem II reaction center protein T.